The sequence spans 91 residues: Small ribosomal subunit protein bS20 (91 aa).

It belongs to the bacterial ribosomal protein bS20 family.

In terms of biological role, binds directly to 16S ribosomal RNA. The chain is Small ribosomal subunit protein bS20 from Caulobacter sp. (strain K31).